A 365-amino-acid chain; its full sequence is UDP-N-acetylglucosamine--N-acetylmuramyl-(pentapeptide) pyrophosphoryl-undecaprenol N-acetylglucosamine transferase (365 aa).

UDP-N-acetyl-alpha-D-glucosamine is bound by residues 17-19, asparagine 129, arginine 167, serine 194, isoleucine 250, 269-274, and glutamine 295; these read TGG and ALTVSE.

It belongs to the glycosyltransferase 28 family. MurG subfamily.

It localises to the cell inner membrane. It carries out the reaction di-trans,octa-cis-undecaprenyl diphospho-N-acetyl-alpha-D-muramoyl-L-alanyl-D-glutamyl-meso-2,6-diaminopimeloyl-D-alanyl-D-alanine + UDP-N-acetyl-alpha-D-glucosamine = di-trans,octa-cis-undecaprenyl diphospho-[N-acetyl-alpha-D-glucosaminyl-(1-&gt;4)]-N-acetyl-alpha-D-muramoyl-L-alanyl-D-glutamyl-meso-2,6-diaminopimeloyl-D-alanyl-D-alanine + UDP + H(+). Its pathway is cell wall biogenesis; peptidoglycan biosynthesis. Cell wall formation. Catalyzes the transfer of a GlcNAc subunit on undecaprenyl-pyrophosphoryl-MurNAc-pentapeptide (lipid intermediate I) to form undecaprenyl-pyrophosphoryl-MurNAc-(pentapeptide)GlcNAc (lipid intermediate II). The sequence is that of UDP-N-acetylglucosamine--N-acetylmuramyl-(pentapeptide) pyrophosphoryl-undecaprenol N-acetylglucosamine transferase from Shewanella violacea (strain JCM 10179 / CIP 106290 / LMG 19151 / DSS12).